The primary structure comprises 1217 residues: ATP-dependent helicase/nuclease subunit A (1217 aa).

In terms of domain architecture, UvrD-like helicase ATP-binding spans 10-475; the sequence is VIWTDAQWQS…IDLSQNFRSR (466 aa). 31 to 38 serves as a coordination point for ATP; that stretch reads AAAGSGKT. The UvrD-like helicase C-terminal domain occupies 476–786; it reads KEVLSTTNYI…RMMTIHSSKG (311 aa).

This sequence belongs to the helicase family. AddA subfamily. In terms of assembly, heterodimer of AddA and AddB/RexB. Mg(2+) is required as a cofactor.

It catalyses the reaction Couples ATP hydrolysis with the unwinding of duplex DNA by translocating in the 3'-5' direction.. The enzyme catalyses ATP + H2O = ADP + phosphate + H(+). Functionally, the heterodimer acts as both an ATP-dependent DNA helicase and an ATP-dependent, dual-direction single-stranded exonuclease. Recognizes the chi site generating a DNA molecule suitable for the initiation of homologous recombination. The AddA nuclease domain is required for chi fragment generation; this subunit has the helicase and 3' -&gt; 5' nuclease activities. This is ATP-dependent helicase/nuclease subunit A from Staphylococcus aureus (strain MSSA476).